A 193-amino-acid chain; its full sequence is Penicillin-binding protein activator LpoB (193 aa).

Positions 1–16 (MKRYLSVALAALVLTG) are cleaved as a signal peptide. The N-palmitoyl cysteine moiety is linked to residue C17. A lipid anchor (S-diacylglycerol cysteine) is attached at C17. The tract at residues 24-55 (EPTTPPVTIEPVTPPVPETPPPVDNVPPPPKM) is disordered. The span at 35–54 (VTPPVPETPPPVDNVPPPPK) shows a compositional bias: pro residues.

It belongs to the LpoB family. As to quaternary structure, interacts with PBP1b.

Its subcellular location is the cell outer membrane. In terms of biological role, regulator of peptidoglycan synthesis that is essential for the function of penicillin-binding protein 1B (PBP1b). This Yersinia enterocolitica serotype O:8 / biotype 1B (strain NCTC 13174 / 8081) protein is Penicillin-binding protein activator LpoB.